We begin with the raw amino-acid sequence, 239 residues long: Hydroxyacylglutathione hydrolase (239 aa).

Positions 54, 56, 58, 59, 112, 131, and 169 each coordinate Zn(2+).

The protein belongs to the metallo-beta-lactamase superfamily. Glyoxalase II family. In terms of assembly, monomer. Zn(2+) serves as cofactor.

It catalyses the reaction an S-(2-hydroxyacyl)glutathione + H2O = a 2-hydroxy carboxylate + glutathione + H(+). It participates in secondary metabolite metabolism; methylglyoxal degradation; (R)-lactate from methylglyoxal: step 2/2. In terms of biological role, thiolesterase that catalyzes the hydrolysis of S-D-lactoyl-glutathione to form glutathione and D-lactic acid. In Pelagibacter ubique (strain HTCC1062), this protein is Hydroxyacylglutathione hydrolase.